The chain runs to 159 residues: Phosphopantetheine adenylyltransferase (159 aa).

Substrate is bound at residue Thr10. Residues Thr10–Phe11 and His18 contribute to the ATP site. Substrate is bound by residues Lys42, Leu74, and Arg88. Residues Gly89–Arg91, Glu99, and Tyr124–Ser130 each bind ATP.

The protein belongs to the bacterial CoaD family. As to quaternary structure, homohexamer. Requires Mg(2+) as cofactor.

The protein resides in the cytoplasm. It carries out the reaction (R)-4'-phosphopantetheine + ATP + H(+) = 3'-dephospho-CoA + diphosphate. It functions in the pathway cofactor biosynthesis; coenzyme A biosynthesis; CoA from (R)-pantothenate: step 4/5. Reversibly transfers an adenylyl group from ATP to 4'-phosphopantetheine, yielding dephospho-CoA (dPCoA) and pyrophosphate. The polypeptide is Phosphopantetheine adenylyltransferase (Hydrogenovibrio crunogenus (strain DSM 25203 / XCL-2) (Thiomicrospira crunogena)).